The sequence spans 67 residues: Kappa-conotoxin-like 1 (67 aa).

The first 26 residues, 1-26 (MMFRLTSVSCFLLVIACLNLFQVVLT), serve as a signal peptide directing secretion. 4 disulfide bridges follow: Cys-29–Cys-43, Cys-36–Cys-48, Cys-42–Cys-51, and Cys-47–Cys-55. Ile-59 is subject to Isoleucine amide. Positions 63 to 67 (ATFQE) are excised as a propeptide.

The protein belongs to the conotoxin I2 superfamily. As to expression, expressed by the venom duct.

It localises to the secreted. Its function is as follows. Inhibits the vertebrate voltage-gated potassium channels Kv1.1/KCNA1 and Kv1.3/KCNA3. This is Kappa-conotoxin-like 1 from Conus vexillum (Flag cone).